The primary structure comprises 648 residues: ATP-dependent zinc metalloprotease FtsH 4 (648 aa).

Residues 1–6 (MKQSHK) lie on the Cytoplasmic side of the membrane. A helical membrane pass occupies residues 7-27 (TLLLWVLLIMMFLAIWQFLSP). Topologically, residues 28 to 111 (DSRPATQVAF…VFFEKEDTSP (84 aa)) are periplasmic. A helical membrane pass occupies residues 112–132 (FWPGAIMYLLPTVFLLVMFYL). The Cytoplasmic segment spans residues 133–648 (FMRQLQAGGG…FGTPKPAPST (516 aa)). 205–212 (GPPGTGKT) provides a ligand contact to ATP. Position 427 (His-427) interacts with Zn(2+). The active site involves Glu-428. 2 residues coordinate Zn(2+): His-431 and Asp-504. The disordered stretch occupies residues 622-648 (YSDRDRAAKEKRRAASIFGTPKPAPST).

The protein in the central section; belongs to the AAA ATPase family. In the C-terminal section; belongs to the peptidase M41 family. Homohexamer. Requires Zn(2+) as cofactor.

Its subcellular location is the cell inner membrane. Its function is as follows. Acts as a processive, ATP-dependent zinc metallopeptidase for both cytoplasmic and membrane proteins. Plays a role in the quality control of integral membrane proteins. This is ATP-dependent zinc metalloprotease FtsH 4 from Sorangium cellulosum (strain So ce56) (Polyangium cellulosum (strain So ce56)).